Here is a 347-residue protein sequence, read N- to C-terminus: Elongation factor Ts (347 aa).

Residues 80–83 (TDFV) are involved in Mg(2+) ion dislocation from EF-Tu.

This sequence belongs to the EF-Ts family.

The protein resides in the cytoplasm. In terms of biological role, associates with the EF-Tu.GDP complex and induces the exchange of GDP to GTP. It remains bound to the aminoacyl-tRNA.EF-Tu.GTP complex up to the GTP hydrolysis stage on the ribosome. In Streptococcus gordonii (strain Challis / ATCC 35105 / BCRC 15272 / CH1 / DL1 / V288), this protein is Elongation factor Ts.